The primary structure comprises 117 residues: Probable glycerol dehydratase-reactivating factor small subunit (117 aa).

Position 31 (glutamate 31) interacts with Mg(2+).

This sequence belongs to the DdrB/PduH family. In terms of assembly, member of the GDR complex, probably composed of DhaF(2)/DhaG(2). It depends on Mg(2+) as a cofactor.

Its function is as follows. Small subunit of the glycerol dehydratase-reactivating factor (GDR), which reactivates suicidally inhibited adenosylcobalamin-dependent glycerol dehydratase. This is Probable glycerol dehydratase-reactivating factor small subunit from Citrobacter freundii.